We begin with the raw amino-acid sequence, 99 residues long: Small integral membrane protein 14 (99 aa).

Residues Met1 to Asn49 lie on the Lumenal side of the membrane. A helical membrane pass occupies residues Gly50–Leu70. The Cytoplasmic portion of the chain corresponds to Arg71–Asp99. Residues Ser78–Asp99 form a disordered region.

It localises to the endoplasmic reticulum membrane. This Bos taurus (Bovine) protein is Small integral membrane protein 14 (SMIM14).